Here is a 953-residue protein sequence, read N- to C-terminus: UPF0746 protein DDB_G0281301 (953 aa).

The span at 1 to 10 (MVNNKRKEIE) shows a compositional bias: basic and acidic residues. The tract at residues 1–23 (MVNNKRKEIENQENDNNDDNDGL) is disordered. The segment covering 11-21 (NQENDNNDDND) has biased composition (acidic residues). The SAP domain occupies 35–69 (YDSIRSKELQTIAKSLGLPIIGKKQEIYKRIEGYF).

Belongs to the UPF0746 family.

This Dictyostelium discoideum (Social amoeba) protein is UPF0746 protein DDB_G0281301.